Here is a 299-residue protein sequence, read N- to C-terminus: Non-structural protein V (299 aa).

Over residues 137–160 (DGVEVWGGDEESENSDVDSGEPDP) the composition is skewed to acidic residues. Disordered stretches follow at residues 137–186 (DGVE…ETVE) and 205–229 (KAGK…KPIK). Zn(2+) is bound by residues H232, C251, C255, C267, C269, C272, C276, and C279.

Belongs to the paramyxoviruses V protein family. Interacts with host IFIH1/MDA5 and DHX58/LGP2. Interacts with host TYK2; this interaction inhibits the type I interferon signaling pathway.

Its subcellular location is the host cytoplasm. Plays an essential role in the inhibition of host immune response. Prevents the establishment of cellular antiviral state by blocking interferon-alpha/beta (IFN-alpha/beta) production and signaling pathway. Interacts with host IFIH1/MDA5 and DHX58/LGP2 to inhibit the transduction pathway involved in the activation of IFN-beta promoter, thus protecting the virus against cell antiviral state. Blocks the type I interferon signaling pathway by interacting with host TYK2 and thereby inhibiting downstream STAT1 and STAT2 phosphorylation. The sequence is that of Non-structural protein V (P/V) from Rinderpest virus (strain Kabete O) (RDV).